A 302-amino-acid polypeptide reads, in one-letter code: Sulfate adenylyltransferase subunit 2 (302 aa).

Residues 280 to 302 (RQGRLIDSDQSASMEQKKRQGYF) are disordered.

The protein belongs to the PAPS reductase family. CysD subfamily. In terms of assembly, heterodimer composed of CysD, the smaller subunit, and CysN.

It carries out the reaction sulfate + ATP + H(+) = adenosine 5'-phosphosulfate + diphosphate. The protein operates within sulfur metabolism; hydrogen sulfide biosynthesis; sulfite from sulfate: step 1/3. Its function is as follows. With CysN forms the ATP sulfurylase (ATPS) that catalyzes the adenylation of sulfate producing adenosine 5'-phosphosulfate (APS) and diphosphate, the first enzymatic step in sulfur assimilation pathway. APS synthesis involves the formation of a high-energy phosphoric-sulfuric acid anhydride bond driven by GTP hydrolysis by CysN coupled to ATP hydrolysis by CysD. The chain is Sulfate adenylyltransferase subunit 2 from Shewanella baltica (strain OS185).